The primary structure comprises 664 residues: UvrABC system protein B (664 aa).

Positions 25–170 (NSILLGNKYQ…FVGQRISIKE (146 aa)) constitute a Helicase ATP-binding domain. An ATP-binding site is contributed by 38–45 (GVTGSGKT). The Beta-hairpin motif lies at 91-114 (YYDYYQPESYVPSKDLFIEKEATI). The Helicase C-terminal domain occupies 429–595 (QMEDLYIEIQ…TIVKKIQNIL (167 aa)). The 36-residue stretch at 622–657 (KKLIDKLKFELEEAVNDERFEDAIVLRDKIKELGSK) folds into the UVR domain.

This sequence belongs to the UvrB family. As to quaternary structure, forms a heterotetramer with UvrA during the search for lesions. Interacts with UvrC in an incision complex.

The protein resides in the cytoplasm. The UvrABC repair system catalyzes the recognition and processing of DNA lesions. A damage recognition complex composed of 2 UvrA and 2 UvrB subunits scans DNA for abnormalities. Upon binding of the UvrA(2)B(2) complex to a putative damaged site, the DNA wraps around one UvrB monomer. DNA wrap is dependent on ATP binding by UvrB and probably causes local melting of the DNA helix, facilitating insertion of UvrB beta-hairpin between the DNA strands. Then UvrB probes one DNA strand for the presence of a lesion. If a lesion is found the UvrA subunits dissociate and the UvrB-DNA preincision complex is formed. This complex is subsequently bound by UvrC and the second UvrB is released. If no lesion is found, the DNA wraps around the other UvrB subunit that will check the other stand for damage. The polypeptide is UvrABC system protein B (Borreliella afzelii (strain PKo) (Borrelia afzelii)).